We begin with the raw amino-acid sequence, 340 residues long: MQLVGMVALMVGVLVSVAYLVYMERKVMAFMQLRHGPSVVGPWGLLQPFSDALKLLAKECIIPFKSRGWAFFAAPVITFALALAGWAVIPLGATEVIRDGVVVVMPYVVADLNLGVLYVLAISSLEVYGIIMAGWASGSNYAFLGAIRSVSQMISYEMSMGLVMLSVSLCAGSLRLTDIVVARHAMPYWMDLLLLPMAGVFFVSMLAETNRHPFDLPEAESELVSGYNVEYSSMSFAMFFLGEYANMILVSAMMVVLFLGGWYPPLNIHILYYIPGFVWFCSKVFLLLFCFIWVRSTVPRYRYDQLMRLGWKVFLPFSFVWVMVISGVLLWVKALPGMQN.

9 helical membrane passes run 3-23 (LVGM…LVYM), 69-89 (WAFF…WAVI), 102-122 (VVVM…VLAI), 127-147 (VYGI…LGAI), 154-174 (ISYE…AGSL), 186-206 (MPYW…VSML), 248-268 (ILVS…PLNI), 274-294 (IPGF…FIWV), and 312-332 (KVFL…LLWV).

The protein belongs to the complex I subunit 1 family. NDH-1 is composed of 14 different subunits. Subunits NuoA, H, J, K, L, M, N constitute the membrane sector of the complex.

The protein resides in the cell inner membrane. It catalyses the reaction a quinone + NADH + 5 H(+)(in) = a quinol + NAD(+) + 4 H(+)(out). In terms of biological role, NDH-1 shuttles electrons from NADH, via FMN and iron-sulfur (Fe-S) centers, to quinones in the respiratory chain. The immediate electron acceptor for the enzyme in this species is believed to be ubiquinone. Couples the redox reaction to proton translocation (for every two electrons transferred, four hydrogen ions are translocated across the cytoplasmic membrane), and thus conserves the redox energy in a proton gradient. This subunit may bind ubiquinone. This chain is NADH-quinone oxidoreductase subunit H, found in Anaplasma phagocytophilum (strain HZ).